A 530-amino-acid chain; its full sequence is Anthranilate synthase component 1, pyocyanine specific (530 aa).

Substrate is bound at residue 331–332 (GT). A Mg(2+)-binding site is contributed by Glu364. Substrate is bound by residues Tyr452, Arg472, 486 to 488 (GAG), and Gly488. Glu501 contacts Mg(2+).

It belongs to the anthranilate synthase component I family. Heterotetramer consisting of two non-identical subunits: a beta subunit (PhnB) and a large alpha subunit (PhnA). It depends on Mg(2+) as a cofactor.

It carries out the reaction chorismate + L-glutamine = anthranilate + pyruvate + L-glutamate + H(+). It functions in the pathway secondary metabolite biosynthesis; pyocyanine biosynthesis. In terms of biological role, part of a heterotetrameric complex that catalyzes the two-step biosynthesis of anthranilate, a precursor for Pseudomonas quinolone signal (2-heptyl-3-hydroxy-4-quinolone; PQS) production which is required to induce the genes for the biosynthesis of the virulence factor pyocyanine (PCN), a characteristic blue-green phenazine pigment produced by P.aeruginosa. In the first step, the glutamine-binding beta subunit (PhnB) of anthranilate synthase (AS) provides the glutamine amidotransferase activity which generates ammonia as a substrate that, along with chorismate, is used in the second step, catalyzed by the large alpha subunit of AS (PhnA) to produce anthranilate. The sequence is that of Anthranilate synthase component 1, pyocyanine specific from Pseudomonas aeruginosa (strain ATCC 15692 / DSM 22644 / CIP 104116 / JCM 14847 / LMG 12228 / 1C / PRS 101 / PAO1).